A 313-amino-acid chain; its full sequence is Porphobilinogen deaminase (313 aa).

An S-(dipyrrolylmethanemethyl)cysteine modification is found at Cys-242.

Belongs to the HMBS family. As to quaternary structure, monomer. It depends on dipyrromethane as a cofactor.

It catalyses the reaction 4 porphobilinogen + H2O = hydroxymethylbilane + 4 NH4(+). The protein operates within porphyrin-containing compound metabolism; protoporphyrin-IX biosynthesis; coproporphyrinogen-III from 5-aminolevulinate: step 2/4. Functionally, tetrapolymerization of the monopyrrole PBG into the hydroxymethylbilane pre-uroporphyrinogen in several discrete steps. This chain is Porphobilinogen deaminase, found in Salmonella dublin (strain CT_02021853).